The primary structure comprises 1083 residues: Regulator of the glycerol channel 1 (1083 aa).

Disordered stretches follow at residues 1-46 (MSDY…GSSD) and 69-89 (LKNE…KENK). Residues 13 to 31 (GGISKQPATPGSTRSSSRN) are compositionally biased toward polar residues. 5 positions are modified to phosphoserine: S136, S249, S252, S481, and S537. The region spanning 495 to 606 (CIRVGYLLKK…DCSLKDSTDS (112 aa)) is the PH domain. Residues 534 to 582 (DSKSPRSKNKPVVEQSDISRVNKDGTNAGSHPSSKGTQDPKLTKRRKGL) are disordered. The span at 549–570 (SDISRVNKDGTNAGSHPSSKGT) shows a compositional bias: polar residues. 3 positions are modified to phosphoserine: S652, S765, and S813. 2 positions are modified to phosphothreonine: T817 and T857. 6 positions are modified to phosphoserine: S866, S879, S918, S966, S969, and S975. Positions 979–1083 (EENRTQNCSG…TVPATSASSK (105 aa)) are disordered. 3 stretches are compositionally biased toward polar residues: residues 983–992 (TQNCSGSRKS), 1043–1061 (LKKT…VSND), and 1071–1083 (STNT…ASSK). 3 positions are modified to phosphoserine: S1059, S1081, and S1082.

Belongs to the RGC1 family.

The protein resides in the cytoplasm. Positive regulator of FPS1 glycerol channel required for the glycerol efflux. In Saccharomyces cerevisiae (strain ATCC 204508 / S288c) (Baker's yeast), this protein is Regulator of the glycerol channel 1 (RGC1).